The following is a 214-amino-acid chain: Adenylate kinase (214 aa).

An ATP-binding site is contributed by 10–15; that stretch reads GGGKGT. Residues 30–59 form an NMP region; that stretch reads STGDMFRENVKGGTELGLKAKEYMDAGQLV. AMP is bound by residues Thr31, Arg36, 57–59, 85–88, and Gln92; these read QLV and GFPR. Positions 126–163 are LID; the sequence is GRRVCRVCGATFHVLFNAPKEDGKCDKCGGELYQRSDD. Arg127 lines the ATP pocket. Positions 130 and 133 each coordinate Zn(2+). An ATP-binding site is contributed by 136–137; that stretch reads TF. Residues Cys150 and Cys153 each coordinate Zn(2+). AMP contacts are provided by Arg160 and Arg171. Residue Gln199 participates in ATP binding.

The protein belongs to the adenylate kinase family. Monomer.

The protein localises to the cytoplasm. The enzyme catalyses AMP + ATP = 2 ADP. The protein operates within purine metabolism; AMP biosynthesis via salvage pathway; AMP from ADP: step 1/1. Its function is as follows. Catalyzes the reversible transfer of the terminal phosphate group between ATP and AMP. Plays an important role in cellular energy homeostasis and in adenine nucleotide metabolism. The protein is Adenylate kinase of Desulforudis audaxviator (strain MP104C).